Consider the following 221-residue polypeptide: Chaperone protein TorD (221 aa).

It belongs to the TorD/DmsD family. TorD subfamily.

It is found in the cytoplasm. Its function is as follows. Involved in the biogenesis of TorA. Acts on TorA before the insertion of the molybdenum cofactor and, as a result, probably favors a conformation of the apoenzyme that is competent for acquiring the cofactor. The protein is Chaperone protein TorD of Shewanella pealeana (strain ATCC 700345 / ANG-SQ1).